Here is a 122-residue protein sequence, read N- to C-terminus: Large ribosomal subunit protein bL12 (122 aa).

This sequence belongs to the bacterial ribosomal protein bL12 family. Homodimer. Part of the ribosomal stalk of the 50S ribosomal subunit. Forms a multimeric L10(L12)X complex, where L10 forms an elongated spine to which 2 to 4 L12 dimers bind in a sequential fashion. Binds GTP-bound translation factors.

In terms of biological role, forms part of the ribosomal stalk which helps the ribosome interact with GTP-bound translation factors. Is thus essential for accurate translation. This chain is Large ribosomal subunit protein bL12, found in Stenotrophomonas maltophilia (strain K279a).